The primary structure comprises 193 residues: Peptidyl-tRNA hydrolase (193 aa).

A tRNA-binding site is contributed by Tyr-17. The Proton acceptor role is filled by His-22. TRNA-binding residues include Tyr-68, Asn-70, and Asn-116.

This sequence belongs to the PTH family. In terms of assembly, monomer.

Its subcellular location is the cytoplasm. The enzyme catalyses an N-acyl-L-alpha-aminoacyl-tRNA + H2O = an N-acyl-L-amino acid + a tRNA + H(+). Hydrolyzes ribosome-free peptidyl-tRNAs (with 1 or more amino acids incorporated), which drop off the ribosome during protein synthesis, or as a result of ribosome stalling. Functionally, catalyzes the release of premature peptidyl moieties from peptidyl-tRNA molecules trapped in stalled 50S ribosomal subunits, and thus maintains levels of free tRNAs and 50S ribosomes. The polypeptide is Peptidyl-tRNA hydrolase (Chromobacterium violaceum (strain ATCC 12472 / DSM 30191 / JCM 1249 / CCUG 213 / NBRC 12614 / NCIMB 9131 / NCTC 9757 / MK)).